Here is a 192-residue protein sequence, read N- to C-terminus: Peptidyl-prolyl cis-trans isomerase 1 (192 aa).

Residues 25–188 form the PPIase cyclophilin-type domain; it reads FFDVSIGEEP…KTVTIADCGE (164 aa).

It belongs to the cyclophilin-type PPIase family.

The catalysed reaction is [protein]-peptidylproline (omega=180) = [protein]-peptidylproline (omega=0). Functionally, PPIases accelerate the folding of proteins. It catalyzes the cis-trans isomerization of proline imidic peptide bonds in oligopeptides. The polypeptide is Peptidyl-prolyl cis-trans isomerase 1 (cyn-1) (Caenorhabditis elegans).